Consider the following 182-residue polypeptide: Inorganic pyrophosphatase (182 aa).

Positions 30, 44, and 56 each coordinate substrate. Mg(2+) contacts are provided by Asp66, Asp71, and Asp103. Tyr142 is a binding site for substrate.

The protein belongs to the PPase family. Homohexamer. Mg(2+) serves as cofactor.

Its subcellular location is the cytoplasm. It carries out the reaction diphosphate + H2O = 2 phosphate + H(+). Functionally, catalyzes the hydrolysis of inorganic pyrophosphate (PPi) forming two phosphate ions. This Buchnera aphidicola subsp. Acyrthosiphon pisum (strain APS) (Acyrthosiphon pisum symbiotic bacterium) protein is Inorganic pyrophosphatase.